We begin with the raw amino-acid sequence, 121 residues long: MRIKRSVTSHKKKKKYIKAAKGYSGAVGRRYSLAKQQYYKSGKYSYAGRKNKKRDYRNLWITRINAAARAQGLKYNELIHGLKLANVDINRKMLSELAVNDPDGFNEYVNIAKQSLAESVQ.

This sequence belongs to the bacterial ribosomal protein bL20 family.

Its function is as follows. Binds directly to 23S ribosomal RNA and is necessary for the in vitro assembly process of the 50S ribosomal subunit. It is not involved in the protein synthesizing functions of that subunit. The protein is Large ribosomal subunit protein bL20 of Petrotoga mobilis (strain DSM 10674 / SJ95).